A 105-amino-acid polypeptide reads, in one-letter code: Met repressor (105 aa).

The protein belongs to the MetJ family. As to quaternary structure, homodimer.

The protein resides in the cytoplasm. Its function is as follows. This regulatory protein, when combined with SAM (S-adenosylmethionine) represses the expression of the methionine regulon and of enzymes involved in SAM synthesis. In Sodalis glossinidius (strain morsitans), this protein is Met repressor.